A 634-amino-acid polypeptide reads, in one-letter code: Mitochondrial Rho GTPase 1 (634 aa).

Residues 1-604 are Cytoplasmic-facing; it reads MLCCMRICVC…PRSEEDVEGK (604 aa). Positions 2–171 constitute a Miro 1 domain; it reads LCCMRICVCG…FFLCQKAVTH (170 aa). Residues 11–18, 60–64, and 116–119 contribute to the GTP site; these read GDEGTGKS, DTSAV, and NKSD. 2 consecutive EF-hand domains span residues 187–222 and 307–342; these read AAVAALQRIFYLSDKDRDGYLSDKEIKDFQMRCFEK and EGYRFFVNLFLLSDKDNDGGLNDAELASLFAPTPGL. Residues aspartate 200, aspartate 202, aspartate 204, tyrosine 206, glutamate 211, aspartate 320, aspartate 322, aspartate 324, and glutamate 331 each contribute to the Ca(2+) site. Positions 399-419 are disordered; sequence NPSTTAALKVTRPRKRRKRPG. Basic residues predominate over residues 409-419; sequence TRPRKRRKRPG. One can recognise a Miro 2 domain in the interval 423 to 589; it reads RNVVLGHIVG…FVHIAEAAME (167 aa). Residues 432–439, 468–472, and 538–541 each bind GTP; these read GAPGSGKS, ELPGG, and LKAD. Residues 605–625 traverse the membrane as a helical; Anchor for type IV membrane protein segment; that stretch reads WMSWGIALGAVVCAGAAAVMI. Topologically, residues 626–634 are mitochondrial intermembrane; that stretch reads WRRVSGSGV.

Belongs to the mitochondrial Rho GTPase family.

The protein localises to the mitochondrion outer membrane. Functionally, mitochondrial GTPase involved in mitochondrial trafficking. Probably involved in control of anterograde transport of mitochondria and their subcellular distribution. The protein is Mitochondrial Rho GTPase 1 (gem1) of Emericella nidulans (strain FGSC A4 / ATCC 38163 / CBS 112.46 / NRRL 194 / M139) (Aspergillus nidulans).